The primary structure comprises 359 residues: Probable dual-specificity RNA methyltransferase RlmN (359 aa).

Glu-100 serves as the catalytic Proton acceptor. One can recognise a Radical SAM core domain in the interval 106–340; the sequence is TDKRLTVCVS…VSVRASRGRD (235 aa). A disulfide bridge connects residues Cys-113 and Cys-345. [4Fe-4S] cluster contacts are provided by Cys-120, Cys-124, and Cys-127. S-adenosyl-L-methionine is bound by residues 167–168, Ser-197, 226–228, and Asn-302; these read GE and SLH. Residue Cys-345 is the S-methylcysteine intermediate of the active site.

The protein belongs to the radical SAM superfamily. RlmN family. The cofactor is [4Fe-4S] cluster.

It localises to the cytoplasm. The catalysed reaction is adenosine(2503) in 23S rRNA + 2 reduced [2Fe-2S]-[ferredoxin] + 2 S-adenosyl-L-methionine = 2-methyladenosine(2503) in 23S rRNA + 5'-deoxyadenosine + L-methionine + 2 oxidized [2Fe-2S]-[ferredoxin] + S-adenosyl-L-homocysteine. It carries out the reaction adenosine(37) in tRNA + 2 reduced [2Fe-2S]-[ferredoxin] + 2 S-adenosyl-L-methionine = 2-methyladenosine(37) in tRNA + 5'-deoxyadenosine + L-methionine + 2 oxidized [2Fe-2S]-[ferredoxin] + S-adenosyl-L-homocysteine. In terms of biological role, specifically methylates position 2 of adenine 2503 in 23S rRNA and position 2 of adenine 37 in tRNAs. The sequence is that of Probable dual-specificity RNA methyltransferase RlmN from Prochlorococcus marinus (strain NATL1A).